The primary structure comprises 360 residues: Phosphoserine aminotransferase (360 aa).

R41 serves as a coordination point for L-glutamate. The pyridoxal 5'-phosphate site is built by W101, T152, D172, and Q195. K196 is modified (N6-(pyridoxal phosphate)lysine). 237–238 (NT) serves as a coordination point for pyridoxal 5'-phosphate.

This sequence belongs to the class-V pyridoxal-phosphate-dependent aminotransferase family. SerC subfamily. Homodimer. Pyridoxal 5'-phosphate serves as cofactor.

It localises to the cytoplasm. The enzyme catalyses O-phospho-L-serine + 2-oxoglutarate = 3-phosphooxypyruvate + L-glutamate. It carries out the reaction 4-(phosphooxy)-L-threonine + 2-oxoglutarate = (R)-3-hydroxy-2-oxo-4-phosphooxybutanoate + L-glutamate. It participates in amino-acid biosynthesis; L-serine biosynthesis; L-serine from 3-phospho-D-glycerate: step 2/3. The protein operates within cofactor biosynthesis; pyridoxine 5'-phosphate biosynthesis; pyridoxine 5'-phosphate from D-erythrose 4-phosphate: step 3/5. Its function is as follows. Catalyzes the reversible conversion of 3-phosphohydroxypyruvate to phosphoserine and of 3-hydroxy-2-oxo-4-phosphonooxybutanoate to phosphohydroxythreonine. In Burkholderia ambifaria (strain ATCC BAA-244 / DSM 16087 / CCUG 44356 / LMG 19182 / AMMD) (Burkholderia cepacia (strain AMMD)), this protein is Phosphoserine aminotransferase.